The following is a 672-amino-acid chain: MSDKGELMEEIMEAKVMWYPDSKKITQMDQFRNRVNRNLGLRLANYNELYQWSVEFYPEFWAEFWDFSGIVYSKTYDEVIDRSKGIADVPEWFKGSRLNYAENLLKHKENDKIALYSAREGKENIEKVTFAELRRDVALFAAAMRKMGIKTGDRVAGYLPNCIQTVEAMLAAASIGAIWSATSPDFGVNGVLDRFSQIQPKLILSVESVIYNGKEHCHLEKLQHVVKGLPDLKKVVVIPYVLPKEKIDISKIPNSMFLDEFLATGKVGDQSPQLEFEQLPFNHPLYIMYSSGTTGAPKCMVHSAGGTLIKHLTEHILHGSTTSSDVIMYYTTAGWMMWNWLITAVATGASLVLYDGSPLVPSLNVLWDLVDRLGITILGTGAKWLAVLEDKGLKPCNTHSLQTLHTILSTGSPLKPQSYEYVYKHIKSNVLLGSVSGGTDIIACFMGQNVSVPVYKGEIQARHLGMAIEAWNEEGEAVLGESGELVCLKPLPSQPTHFWNDENGSKYQKAYFAKFPGVWAHGDYCKINPKTGGIVMLGRSDGTLNPNGVRFGSSEIYNIVEAFVEVSDSLCVPQYNKDGDERVILFLKMADKFEFSKELLKRIKDAIRVALSARHVPALILETKDIPYTISGKKVEVAVKQVIAGKEVPHRGAFSNPQSLDLYRNIPELQNF.

The protein belongs to the ATP-dependent AMP-binding enzyme family.

It is found in the cytoplasm. The protein localises to the cytosol. It catalyses the reaction acetoacetate + ATP + CoA = acetoacetyl-CoA + AMP + diphosphate. In terms of biological role, activates acetoacetate to acetoacetyl-CoA. The chain is Acetoacetyl-CoA synthetase (aacs) from Xenopus tropicalis (Western clawed frog).